A 35-amino-acid chain; its full sequence is Leukocyte cysteine proteinase inhibitor 2 (35 aa).

Residues 1 to 35 (LAGGLTEPRPADTEIQEIANKVKPQLEEKTNKKYD) form a disordered region. Residues 24–35 (PQLEEKTNKKYD) show a composition bias toward basic and acidic residues.

It belongs to the cystatin family.

It is found in the cytoplasm. Its function is as follows. Potent inhibitor of cathepsins L and S, and papain. This chain is Leukocyte cysteine proteinase inhibitor 2, found in Sus scrofa (Pig).